Reading from the N-terminus, the 167-residue chain is Large ribosomal subunit protein bL9 (167 aa).

Belongs to the bacterial ribosomal protein bL9 family.

Functionally, binds to the 23S rRNA. The sequence is that of Large ribosomal subunit protein bL9 from Chlamydia trachomatis serovar L2 (strain ATCC VR-902B / DSM 19102 / 434/Bu).